The primary structure comprises 450 residues: tRNA modification GTPase MnmE (450 aa).

(6S)-5-formyl-5,6,7,8-tetrahydrofolate is bound by residues Arg-20, Glu-78, and Lys-117. The TrmE-type G domain maps to 211–372; it reads GFRMVIVGKP…LEEAIYRETQ (162 aa). Asn-221 is a binding site for K(+). Residues 221–226, 240–246, and 265–268 contribute to the GTP site; these read NVGKST, TDIPGTT, and DTAG. Residue Ser-225 coordinates Mg(2+). K(+) contacts are provided by Thr-240, Ile-242, and Thr-245. Thr-246 contacts Mg(2+). (6S)-5-formyl-5,6,7,8-tetrahydrofolate is bound at residue Lys-450.

This sequence belongs to the TRAFAC class TrmE-Era-EngA-EngB-Septin-like GTPase superfamily. TrmE GTPase family. Homodimer. Heterotetramer of two MnmE and two MnmG subunits. It depends on K(+) as a cofactor.

The protein localises to the cytoplasm. Exhibits a very high intrinsic GTPase hydrolysis rate. Involved in the addition of a carboxymethylaminomethyl (cmnm) group at the wobble position (U34) of certain tRNAs, forming tRNA-cmnm(5)s(2)U34. This is tRNA modification GTPase MnmE from Thermotoga petrophila (strain ATCC BAA-488 / DSM 13995 / JCM 10881 / RKU-1).